We begin with the raw amino-acid sequence, 77 residues long: Acyl carrier protein (77 aa).

Residues 2–77 (SNIEERVKKI…AAIDYVSKNQ (76 aa)) enclose the Carrier domain. Residue Ser37 is modified to O-(pantetheine 4'-phosphoryl)serine.

The protein belongs to the acyl carrier protein (ACP) family. 4'-phosphopantetheine is transferred from CoA to a specific serine of apo-ACP by AcpS. This modification is essential for activity because fatty acids are bound in thioester linkage to the sulfhydryl of the prosthetic group.

It localises to the cytoplasm. It participates in lipid metabolism; fatty acid biosynthesis. Carrier of the growing fatty acid chain in fatty acid biosynthesis. In Shewanella denitrificans (strain OS217 / ATCC BAA-1090 / DSM 15013), this protein is Acyl carrier protein.